Consider the following 340-residue polypeptide: N-acetyl-gamma-glutamyl-phosphate reductase (340 aa).

Cysteine 146 is a catalytic residue.

The protein belongs to the NAGSA dehydrogenase family. Type 1 subfamily.

It localises to the cytoplasm. It catalyses the reaction N-acetyl-L-glutamate 5-semialdehyde + phosphate + NADP(+) = N-acetyl-L-glutamyl 5-phosphate + NADPH + H(+). It participates in amino-acid biosynthesis; L-arginine biosynthesis; N(2)-acetyl-L-ornithine from L-glutamate: step 3/4. In terms of biological role, catalyzes the NADPH-dependent reduction of N-acetyl-5-glutamyl phosphate to yield N-acetyl-L-glutamate 5-semialdehyde. This Streptococcus mutans serotype c (strain ATCC 700610 / UA159) protein is N-acetyl-gamma-glutamyl-phosphate reductase.